A 456-amino-acid polypeptide reads, in one-letter code: Shootin-1 (456 aa).

Methionine 1 is modified (N-acetylmethionine). 2 positions are modified to phosphoserine: serine 3 and serine 4. Positions 7 to 353 (EKQLQLITSL…RVNQSENSVP (347 aa)) form a coiled coil. Residues serine 101 and serine 249 each carry the phosphoserine; by PAK1 modification. Disordered stretches follow at residues 343–405 (KRVN…VTDL) and 418–445 (KKGV…CESA). Positions 352–369 (VPPPPPPPPPLPPPPPNP) are enriched in pro residues. Serine 375 is subject to Phosphoserine.

The protein belongs to the shootin family. As to quaternary structure, interacts with L1CAM; this interaction occurs in axonal growth cones. Interacts with actin filament retrograde flow; this interaction is enhanced in a netrin-1- and PAK1-dependent manner and promotes F-actin-substrate coupling and concomitant formation of traction forces at axonal growth cones. Interacts with RUFY3. Interacts with PFN2. Interacts (via N-terminus) with KIF20B; this interaction is direct and promotes the association of SHTN1 to microtubules in primary neurons. Associates with microtubule. Post-translationally, phosphorylated on Ser-101 and Ser-249 by PAK1 through a CDC42- and RAC1-dependent signaling pathway, which enhances its association with F-actin retrograde flow in filopodia and lamellipodia of axonal growth cones. Phosphorylation on Ser-101 and Ser-249 is increased by netrin-1.

The protein resides in the perikaryon. It localises to the cell projection. Its subcellular location is the axon. The protein localises to the growth cone. It is found in the cytoplasm. The protein resides in the cytoskeleton. It localises to the filopodium. Its subcellular location is the lamellipodium. In terms of biological role, involved in the generation of internal asymmetric signals required for neuronal polarization and neurite outgrowth. Mediates netrin-1-induced F-actin-substrate coupling or 'clutch engagement' within the axon growth cone through activation of CDC42, RAC1 and PAK1-dependent signaling pathway, thereby converting the F-actin retrograde flow into traction forces, concomitantly with filopodium extension and axon outgrowth. Plays a role in cytoskeletal organization by regulating the subcellular localization of phosphoinositide 3-kinase (PI3K) activity at the axonal growth cone. Also plays a role in regenerative neurite outgrowth. In the developing cortex, cooperates with KIF20B to promote both the transition from the multipolar to the bipolar stage and the radial migration of cortical neurons from the ventricular zone toward the superficial layer of the neocortex. Involved in the accumulation of phosphatidylinositol 3,4,5-trisphosphate (PIP3) in the growth cone of primary hippocampal neurons. The chain is Shootin-1 from Pongo abelii (Sumatran orangutan).